A 380-amino-acid polypeptide reads, in one-letter code: Deoxyguanosinetriphosphate triphosphohydrolase-like protein (380 aa).

One can recognise an HD domain in the interval 79-196 (RLTHTLEVQQ…VDAADALAYT (118 aa)).

This sequence belongs to the dGTPase family. Type 2 subfamily.

The sequence is that of Deoxyguanosinetriphosphate triphosphohydrolase-like protein from Deinococcus deserti (strain DSM 17065 / CIP 109153 / LMG 22923 / VCD115).